The chain runs to 257 residues: Type III pantothenate kinase (257 aa).

Position 6 to 13 (6 to 13) interacts with ATP; the sequence is DVGNTSTK. Residue 109 to 112 participates in substrate binding; that stretch reads GADR. Asp111 serves as the catalytic Proton acceptor. Asp132 serves as a coordination point for K(+). Thr135 is a binding site for ATP. A substrate-binding site is contributed by Thr187.

Belongs to the type III pantothenate kinase family. As to quaternary structure, homodimer. NH4(+) is required as a cofactor. The cofactor is K(+).

It is found in the cytoplasm. It catalyses the reaction (R)-pantothenate + ATP = (R)-4'-phosphopantothenate + ADP + H(+). It functions in the pathway cofactor biosynthesis; coenzyme A biosynthesis; CoA from (R)-pantothenate: step 1/5. In terms of biological role, catalyzes the phosphorylation of pantothenate (Pan), the first step in CoA biosynthesis. The chain is Type III pantothenate kinase from Anaplasma marginale (strain Florida).